Consider the following 402-residue polypeptide: 1-deoxy-D-xylulose 5-phosphate reductoisomerase (402 aa).

T21, G22, S23, I24, G47, N50, and N127 together coordinate NADPH. Residue K128 coordinates 1-deoxy-D-xylulose 5-phosphate. Residue E129 participates in NADPH binding. D151 contributes to the Mn(2+) binding site. Positions 152, 153, 177, and 200 each coordinate 1-deoxy-D-xylulose 5-phosphate. E153 is a binding site for Mn(2+). G206 is a binding site for NADPH. The 1-deoxy-D-xylulose 5-phosphate site is built by S213, N218, K219, and E222. Position 222 (E222) interacts with Mn(2+).

Belongs to the DXR family. It depends on Mg(2+) as a cofactor. Requires Mn(2+) as cofactor.

It catalyses the reaction 2-C-methyl-D-erythritol 4-phosphate + NADP(+) = 1-deoxy-D-xylulose 5-phosphate + NADPH + H(+). The protein operates within isoprenoid biosynthesis; isopentenyl diphosphate biosynthesis via DXP pathway; isopentenyl diphosphate from 1-deoxy-D-xylulose 5-phosphate: step 1/6. Its function is as follows. Catalyzes the NADPH-dependent rearrangement and reduction of 1-deoxy-D-xylulose-5-phosphate (DXP) to 2-C-methyl-D-erythritol 4-phosphate (MEP). The sequence is that of 1-deoxy-D-xylulose 5-phosphate reductoisomerase from Mycobacterium marinum (strain ATCC BAA-535 / M).